The following is a 690-amino-acid chain: eEF1A lysine and N-terminal methyltransferase (690 aa).

The tract at residues 427-451 (AAASSASKKKNKKKAKQPASTGAKD) is disordered. The span at 433–442 (SKKKNKKKAK) shows a compositional bias: basic residues.

The protein belongs to the methyltransferase superfamily.

It carries out the reaction L-lysyl-[protein] + S-adenosyl-L-methionine = N(6)-methyl-L-lysyl-[protein] + S-adenosyl-L-homocysteine + H(+). It catalyses the reaction N(6)-methyl-L-lysyl-[protein] + S-adenosyl-L-methionine = N(6),N(6)-dimethyl-L-lysyl-[protein] + S-adenosyl-L-homocysteine + H(+). The catalysed reaction is N-terminal glycyl-L-lysyl-L-glutamyl-[protein] + 3 S-adenosyl-L-methionine = N-terminal N,N,N-trimethyl-glycyl-L-lysyl-L-glutamyl-[protein] + 3 S-adenosyl-L-homocysteine + 3 H(+). Its function is as follows. Dual methyltransferase that catalyzes methylation of elongation factor 1-alpha (eef1a1 and eef1a2) at two different positions, and is therefore involved in the regulation of mRNA translation. Via its C-terminus, methylates the N-terminus of eef1a1 and eef1a2. Via its N-terminus dimethylates lysine residues of eef1a1 and eef1a2. The protein is eEF1A lysine and N-terminal methyltransferase (mettl13) of Danio rerio (Zebrafish).